The chain runs to 441 residues: Ribulose bisphosphate carboxylase large chain (441 aa).

Asn89 and Thr139 together coordinate substrate. Lys141 functions as the Proton acceptor in the catalytic mechanism. A substrate-binding site is contributed by Lys143. Residues Lys167, Asp169, and Glu170 each coordinate Mg(2+). Lys167 is subject to N6-carboxylysine. His260 functions as the Proton acceptor in the catalytic mechanism. Arg261, His293, and Ser345 together coordinate substrate.

It belongs to the RuBisCO large chain family. Type I subfamily. Heterohexadecamer of 8 large chains and 8 small chains; disulfide-linked. The disulfide link is formed within the large subunit homodimers. Mg(2+) serves as cofactor. Post-translationally, the disulfide bond which can form in the large chain dimeric partners within the hexadecamer appears to be associated with oxidative stress and protein turnover.

The protein localises to the plastid. Its subcellular location is the chloroplast. The enzyme catalyses 2 (2R)-3-phosphoglycerate + 2 H(+) = D-ribulose 1,5-bisphosphate + CO2 + H2O. It catalyses the reaction D-ribulose 1,5-bisphosphate + O2 = 2-phosphoglycolate + (2R)-3-phosphoglycerate + 2 H(+). Its function is as follows. RuBisCO catalyzes two reactions: the carboxylation of D-ribulose 1,5-bisphosphate, the primary event in carbon dioxide fixation, as well as the oxidative fragmentation of the pentose substrate in the photorespiration process. Both reactions occur simultaneously and in competition at the same active site. The polypeptide is Ribulose bisphosphate carboxylase large chain (Viola sororia (Woolly blue violet)).